A 388-amino-acid polypeptide reads, in one-letter code: Paired box protein Pax-5 (388 aa).

The paired DNA-binding region spans 15–141 (RHGGVNQLGG…SSINRIIRTK (127 aa)). The tract at residues 18–74 (GVNQLGGVFVNGRPLPDVVRQRIVELAHQGVRPCDISRQLRVSHGCVSKILGRYYET) is PAI subdomain. The RED subdomain stretch occupies residues 93–141 (KVVDKIADYKRQNPTMFAWEIRDRLLAERVCDNDTVPSVSSINRIIRTK). The span at 143–158 (QQPTNQQIPPSNHSIA) shows a compositional bias: polar residues. Disordered stretches follow at residues 143-162 (QQPTNQQIPPSNHSIASTGS) and 191-217 (AETNKRKRDEGIQESPIPNGHSLPGRD).

First detected in mid-neurula embryos in the folding neural tube. With the completion of neurulation, expression becomes localized to the midbrain/hindbrain boundary (MHB) till at least stage 40. Expression is absent from regions adjacent to the MHB. In tailbuds, weakly and transiently expressed in the developing otic vesicle from stage 21 to stage 27.

It localises to the nucleus. In terms of biological role, probable transcription factor. The protein is Paired box protein Pax-5 of Xenopus laevis (African clawed frog).